A 100-amino-acid polypeptide reads, in one-letter code: Small ribosomal subunit protein bS6 (100 aa).

Belongs to the bacterial ribosomal protein bS6 family.

Functionally, binds together with bS18 to 16S ribosomal RNA. The chain is Small ribosomal subunit protein bS6 from Tropheryma whipplei (strain TW08/27) (Whipple's bacillus).